We begin with the raw amino-acid sequence, 440 residues long: Protein disulfide-isomerase 5-2 (440 aa).

The signal sequence occupies residues 1–23 (MRSLKLLLCWISFLTLSISISAS). Residues 24-139 (SDDQFTLDGT…LVRYLKKFVA (116 aa)) form the Thioredoxin domain. Residues cysteine 61 and cysteine 64 each act as nucleophile in the active site. A disulfide bridge connects residues cysteine 61 and cysteine 64. At threonine 160 the chain carries Phosphothreonine. A glycan (N-linked (GlcNAc...) asparagine) is linked at asparagine 171. A helical transmembrane segment spans residues 376-396 (SMIGIRSVYILVFLVAVIMML). Positions 406-440 (TGVRTATAVRERVDQATTVPEDESSEHKPSDKKED) are disordered. The segment covering 430–440 (SEHKPSDKKED) has biased composition (basic and acidic residues).

Belongs to the protein disulfide isomerase family. As to expression, widely expressed.

The protein localises to the membrane. Functionally, acts as a protein-folding catalyst that interacts with nascent polypeptides to catalyze the formation, isomerization, and reduction or oxidation of disulfide bonds. This is Protein disulfide-isomerase 5-2 (PDIL5-2) from Arabidopsis thaliana (Mouse-ear cress).